The chain runs to 89 residues: Small ribosomal subunit protein uS15 (89 aa).

The protein belongs to the universal ribosomal protein uS15 family. Part of the 30S ribosomal subunit. Forms a bridge to the 50S subunit in the 70S ribosome, contacting the 23S rRNA.

Its function is as follows. One of the primary rRNA binding proteins, it binds directly to 16S rRNA where it helps nucleate assembly of the platform of the 30S subunit by binding and bridging several RNA helices of the 16S rRNA. Functionally, forms an intersubunit bridge (bridge B4) with the 23S rRNA of the 50S subunit in the ribosome. The protein is Small ribosomal subunit protein uS15 of Bifidobacterium longum (strain DJO10A).